Consider the following 368-residue polypeptide: Peptide chain release factor 2 (368 aa).

An N5-methylglutamine modification is found at Q250.

Belongs to the prokaryotic/mitochondrial release factor family. Methylated by PrmC. Methylation increases the termination efficiency of RF2.

It localises to the cytoplasm. Peptide chain release factor 2 directs the termination of translation in response to the peptide chain termination codons UGA and UAA. This chain is Peptide chain release factor 2, found in Mycolicibacterium smegmatis (strain ATCC 700084 / mc(2)155) (Mycobacterium smegmatis).